The chain runs to 364 residues: Fructose-1,6-bisphosphatase class 1 2 (364 aa).

Mg(2+)-binding residues include Glu99, Asp121, Leu123, and Asp124. Substrate is bound by residues 124–127 (DGSS) and Asn220. Position 292 (Glu292) interacts with Mg(2+).

The protein belongs to the FBPase class 1 family. In terms of assembly, homotetramer. Requires Mg(2+) as cofactor.

It localises to the cytoplasm. The catalysed reaction is beta-D-fructose 1,6-bisphosphate + H2O = beta-D-fructose 6-phosphate + phosphate. The protein operates within carbohydrate biosynthesis; gluconeogenesis. The protein is Fructose-1,6-bisphosphatase class 1 2 of Polaromonas naphthalenivorans (strain CJ2).